A 151-amino-acid chain; its full sequence is uncharacterized protein (151 aa).

Residues 3–151 (IKIDDLTGRQ…PNSVFMTKKL (149 aa)) form the N-acetyltransferase domain.

Belongs to the acetyltransferase family.

This is an uncharacterized protein from Bacillus subtilis (strain 168).